The following is a 262-amino-acid chain: Small ribosomal subunit protein uS2 (262 aa).

Belongs to the universal ribosomal protein uS2 family.

The chain is Small ribosomal subunit protein uS2 from Borreliella burgdorferi (strain ZS7) (Borrelia burgdorferi).